The primary structure comprises 220 residues: Elongation factor Ts, chloroplastic (220 aa).

The protein belongs to the EF-Ts family.

The protein resides in the plastid. It localises to the chloroplast. Functionally, associates with the EF-Tu.GDP complex and induces the exchange of GDP to GTP. It remains bound to the aminoacyl-tRNA.EF-Tu.GTP complex up to the GTP hydrolysis stage on the ribosome. In Pyropia yezoensis (Susabi-nori), this protein is Elongation factor Ts, chloroplastic (tsf).